A 60-amino-acid chain; its full sequence is U1-theraphotoxin-Agm3a (60 aa).

Residues 1 to 21 form the signal peptide; that stretch reads MKFSVLVFILGLVLLLALSSA. Residues 22 to 29 constitute a propeptide that is removed on maturation; sequence TEMEENAR. Cystine bridges form between cysteine 31-cysteine 45, cysteine 38-cysteine 50, and cysteine 44-cysteine 57.

Belongs to the neurotoxin 10 (Hwtx-1) family. 63 (VsTx1) subfamily. As to expression, expressed by the venom gland.

The protein resides in the secreted. In terms of biological role, inhibits sodium channels Nav1.7/SCN9A and potassium channels Kv11.1/KCNH2. Also binds the voltage-sensor domain of the potassium channel KvAP (from the archaeon Aeropyrum pernix) with very slow apparent binding kinetics and affects channel gating. Reaches its target by dynamically partitioning into anionic or zwitterionic headgroup lipid membranes. May bind to the open state of KvAP. This is U1-theraphotoxin-Agm3a from Acanthoscurria gomesiana (Tarantula spider).